Here is a 206-residue protein sequence, read N- to C-terminus: Recombination protein RecR (206 aa).

The C4-type zinc-finger motif lies at 58–73 (CENCHNISDTKVCEIC). The Toprim domain maps to 81–176 (QTICVVEDIR…IISTIARGIS (96 aa)).

It belongs to the RecR family.

Functionally, may play a role in DNA repair. It seems to be involved in an RecBC-independent recombinational process of DNA repair. It may act with RecF and RecO. This is Recombination protein RecR from Flavobacterium johnsoniae (strain ATCC 17061 / DSM 2064 / JCM 8514 / BCRC 14874 / CCUG 350202 / NBRC 14942 / NCIMB 11054 / UW101) (Cytophaga johnsonae).